Reading from the N-terminus, the 213-residue chain is Probable transaldolase (213 aa).

Lysine 83 functions as the Schiff-base intermediate with substrate in the catalytic mechanism.

It belongs to the transaldolase family. Type 3B subfamily.

Its subcellular location is the cytoplasm. The enzyme catalyses D-sedoheptulose 7-phosphate + D-glyceraldehyde 3-phosphate = D-erythrose 4-phosphate + beta-D-fructose 6-phosphate. It functions in the pathway carbohydrate degradation; pentose phosphate pathway; D-glyceraldehyde 3-phosphate and beta-D-fructose 6-phosphate from D-ribose 5-phosphate and D-xylulose 5-phosphate (non-oxidative stage): step 2/3. Transaldolase is important for the balance of metabolites in the pentose-phosphate pathway. The protein is Probable transaldolase of Syntrophomonas wolfei subsp. wolfei (strain DSM 2245B / Goettingen).